A 327-amino-acid polypeptide reads, in one-letter code: GMP reductase (327 aa).

The Thioimidate intermediate role is filled by cysteine 176. 205–228 (IIADGGIRTHGDIAKSIRFGASMV) lines the NADP(+) pocket.

This sequence belongs to the IMPDH/GMPR family. GuaC type 2 subfamily.

It catalyses the reaction IMP + NH4(+) + NADP(+) = GMP + NADPH + 2 H(+). In terms of biological role, catalyzes the irreversible NADPH-dependent deamination of GMP to IMP. It functions in the conversion of nucleobase, nucleoside and nucleotide derivatives of G to A nucleotides, and in maintaining the intracellular balance of A and G nucleotides. This chain is GMP reductase, found in Streptococcus gordonii (strain Challis / ATCC 35105 / BCRC 15272 / CH1 / DL1 / V288).